A 131-amino-acid polypeptide reads, in one-letter code: Small ribosomal subunit protein uS8 (131 aa).

This sequence belongs to the universal ribosomal protein uS8 family. As to quaternary structure, part of the 30S ribosomal subunit. Contacts proteins S5 and S12.

Functionally, one of the primary rRNA binding proteins, it binds directly to 16S rRNA central domain where it helps coordinate assembly of the platform of the 30S subunit. The polypeptide is Small ribosomal subunit protein uS8 (Campylobacter jejuni subsp. jejuni serotype O:23/36 (strain 81-176)).